The following is a 246-amino-acid chain: Homeobox protein SIX6 (246 aa).

A DNA-binding region (homeobox) is located at residues 128–187 (GEQKTHCFKERTRHLLREWYLQDPYPNPSKKRELAQATGLTPTQVGNWFKNRRQRDRAAA). Positions 190-246 (NRLQQQVLSQGSGRALRAEGDGTPEVLGVATSPAASLSSKAATSAISITSSDSECDI) are disordered. Over residues 191 to 201 (RLQQQVLSQGS) the composition is skewed to polar residues. The residue at position 212 (T212) is a Phosphothreonine. Residues 219–246 (ATSPAASLSSKAATSAISITSSDSECDI) are compositionally biased toward low complexity. Phosphoserine occurs at positions 221, 225, 227, and 228.

Belongs to the SIX/Sine oculis homeobox family. Interacts with TLE4 and TLE5. As to expression, expressed in the developing and adult retina. Also expressed in the hypothalamic and the pituitary regions.

The protein resides in the nucleus. Functionally, may be involved in eye development. This Homo sapiens (Human) protein is Homeobox protein SIX6 (SIX6).